The following is a 547-amino-acid chain: Chaperonin GroEL (547 aa).

ATP is bound by residues threonine 30–proline 33, lysine 51, aspartate 87–threonine 91, glycine 415, and aspartate 495. Residues lysine 526–phenylalanine 547 are disordered. A compositionally biased stretch (gly residues) spans alanine 530–phenylalanine 547.

The protein belongs to the chaperonin (HSP60) family. In terms of assembly, forms a cylinder of 14 subunits composed of two heptameric rings stacked back-to-back. Interacts with the co-chaperonin GroES.

It is found in the cytoplasm. It catalyses the reaction ATP + H2O + a folded polypeptide = ADP + phosphate + an unfolded polypeptide.. In terms of biological role, together with its co-chaperonin GroES, plays an essential role in assisting protein folding. The GroEL-GroES system forms a nano-cage that allows encapsulation of the non-native substrate proteins and provides a physical environment optimized to promote and accelerate protein folding. This is Chaperonin GroEL from Hyphomonas neptunium (strain ATCC 15444).